We begin with the raw amino-acid sequence, 226 residues long: Respiratory nitrate reductase 2 gamma chain (226 aa).

Residues Met1 to Tyr4 are Periplasmic-facing. A helical membrane pass occupies residues Leu5–Asp30. The Cytoplasmic portion of the chain corresponds to Tyr31–Gly48. Residues Met49–Met71 traverse the membrane as a helical segment. 2 residues coordinate heme b: His57 and His67. Topologically, residues Leu72–Pro83 are periplasmic. The helical transmembrane segment at Val84–Arg113 threads the bilayer. Residues Leu114–Thr125 are Cytoplasmic-facing. Residues Pro126–Ala149 traverse the membrane as a helical segment. The Periplasmic segment spans residues Gln150–Phe183. A helical transmembrane segment spans residues Val184–Phe199. Residues His188 and His206 each coordinate heme b. The Cytoplasmic segment spans residues Pro200 to Arg226.

As to quaternary structure, dimer of heterotrimers each composed of an alpha, a beta and a gamma chain. Alpha and beta are catalytic chains; gamma chains are involved in binding the enzyme complex to the cytoplasmic membrane. Heme is required as a cofactor.

It localises to the cell inner membrane. It carries out the reaction nitrate + a quinol = a quinone + nitrite + H2O. In terms of biological role, this is a second nitrate reductase enzyme which can substitute for the NRA enzyme and allows E.coli to use nitrate as an electron acceptor during anaerobic growth. The gamma chain is a membrane-embedded heme-iron unit resembling cytochrome b, which transfers electrons from quinones to the beta subunit. This is Respiratory nitrate reductase 2 gamma chain (narV) from Escherichia coli (strain K12).